The following is a 566-amino-acid chain: Beta-1,2-xylosyltransferease XAX1 (566 aa).

The disordered stretch occupies residues 1 to 25; the sequence is MTSTAYSRPSKLPGGGNGSDRRLPP. At 1 to 43 the chain is on the cytoplasmic side; that stretch reads MTSTAYSRPSKLPGGGNGSDRRLPPRLMRGLTTKIEPKKLGVG. Residues 44–64 traverse the membrane as a helical; Signal-anchor for type II membrane protein segment; the sequence is LLAGCCLALLTYVSLAKLFAI. Topologically, residues 65–566 are lumenal; sequence YSPVFASTAN…LLQALDRLQQ (502 aa). A glycan (N-linked (GlcNAc...) asparagine) is linked at Asn74. The interval 78–180 is disordered; that stretch reads LMQNSPPSSP…AAGGDTKIKC (103 aa). Over residues 84–94 the composition is skewed to pro residues; it reads PSSPETGPIPP. Residues Asn104, Asn368, Asn429, Asn515, and Asn549 are each glycosylated (N-linked (GlcNAc...) asparagine).

The protein belongs to the glycosyltransferase 61 family. In terms of tissue distribution, highly expressed in young panicles.

It is found in the golgi apparatus membrane. Its pathway is glycan metabolism. Glycosyltransferase involved in the xylosylation of xylan, the major hemicellulose (non-cellulosic component) of primary and secondary walls of angiosperms. Possesses beta-1,2-xylosyltransferase activity, transferring xylose from UDP-xylose to the xylan backbone. In Oryza sativa subsp. japonica (Rice), this protein is Beta-1,2-xylosyltransferease XAX1.